The following is a 277-amino-acid chain: Putative phosphoenolpyruvate synthase regulatory protein (277 aa).

156–163 contributes to the ADP binding site; that stretch reads GVSRAGKT.

It belongs to the pyruvate, phosphate/water dikinase regulatory protein family. PSRP subfamily.

It catalyses the reaction [pyruvate, water dikinase] + ADP = [pyruvate, water dikinase]-phosphate + AMP + H(+). The catalysed reaction is [pyruvate, water dikinase]-phosphate + phosphate + H(+) = [pyruvate, water dikinase] + diphosphate. Functionally, bifunctional serine/threonine kinase and phosphorylase involved in the regulation of the phosphoenolpyruvate synthase (PEPS) by catalyzing its phosphorylation/dephosphorylation. This is Putative phosphoenolpyruvate synthase regulatory protein from Deinococcus radiodurans (strain ATCC 13939 / DSM 20539 / JCM 16871 / CCUG 27074 / LMG 4051 / NBRC 15346 / NCIMB 9279 / VKM B-1422 / R1).